Here is a 142-residue protein sequence, read N- to C-terminus: Putative pre-16S rRNA nuclease (142 aa).

The protein belongs to the YqgF nuclease family.

It localises to the cytoplasm. Functionally, could be a nuclease involved in processing of the 5'-end of pre-16S rRNA. The chain is Putative pre-16S rRNA nuclease from Shouchella clausii (strain KSM-K16) (Alkalihalobacillus clausii).